Reading from the N-terminus, the 354-residue chain is Putative Xaa-Pro aminopeptidase (354 aa).

Residues D213, D224, H290, E319, and E333 each coordinate Mn(2+).

Belongs to the peptidase M24B family. The cofactor is Mn(2+).

The enzyme catalyses Release of any N-terminal amino acid, including proline, that is linked to proline, even from a dipeptide or tripeptide.. The protein is Putative Xaa-Pro aminopeptidase (pepP) of Mycoplasma pneumoniae (strain ATCC 29342 / M129 / Subtype 1) (Mycoplasmoides pneumoniae).